Here is a 315-residue protein sequence, read N- to C-terminus: Calumenin-A (315 aa).

The signal sequence occupies residues 1–19; it reads MEIRPLLMCFALCVVYATS. EF-hand domains are found at residues 68-103, 104-139, 151-186, 188-223, 229-264, and 265-300; these read ESKR…AQKK, YIYE…TYLD, HMMA…EEYD, MKDI…HEDE, WVAT…SDYD, and HAEA…FVGS. Ca(2+)-binding residues include D81, D83, D85, E92, D117, N119, D121, M123, and E128. An N-linked (GlcNAc...) asparagine glycan is attached at N131. Residues D164, N166, D168, E175, D201, N203, D205, E212, D242, N244, D246, K248, E253, D278, N280, D282, K284, and E289 each coordinate Ca(2+). The short motif at 312-315 is the Prevents secretion from ER element; it reads HDEF.

It belongs to the CREC family. As to quaternary structure, interacts with ggcx.

It is found in the endoplasmic reticulum membrane. The protein resides in the golgi apparatus. Its subcellular location is the secreted. The protein localises to the melanosome. It localises to the sarcoplasmic reticulum lumen. In terms of biological role, involved in regulation of vitamin K-dependent carboxylation of multiple N-terminal glutamate residues. Seems to inhibit gamma-carboxylase ggcx. Binds 7 calcium ions with a low affinity. The sequence is that of Calumenin-A (calua) from Salmo salar (Atlantic salmon).